Consider the following 171-residue polypeptide: 3-hydroxydecanoyl-[acyl-carrier-protein] dehydratase (171 aa).

His70 is an active-site residue.

This sequence belongs to the thioester dehydratase family. FabA subfamily. As to quaternary structure, homodimer.

The protein localises to the cytoplasm. It catalyses the reaction a (3R)-hydroxyacyl-[ACP] = a (2E)-enoyl-[ACP] + H2O. The catalysed reaction is (3R)-hydroxydecanoyl-[ACP] = (2E)-decenoyl-[ACP] + H2O. It carries out the reaction (2E)-decenoyl-[ACP] = (3Z)-decenoyl-[ACP]. It participates in lipid metabolism; fatty acid biosynthesis. Functionally, necessary for the introduction of cis unsaturation into fatty acids. Catalyzes the dehydration of (3R)-3-hydroxydecanoyl-ACP to E-(2)-decenoyl-ACP and then its isomerization to Z-(3)-decenoyl-ACP. Can catalyze the dehydratase reaction for beta-hydroxyacyl-ACPs with saturated chain lengths up to 16:0, being most active on intermediate chain length. This is 3-hydroxydecanoyl-[acyl-carrier-protein] dehydratase from Stutzerimonas stutzeri (strain A1501) (Pseudomonas stutzeri).